We begin with the raw amino-acid sequence, 620 residues long: 1-deoxy-D-xylulose-5-phosphate synthase (620 aa).

Residues His75 and 116-118 each bind thiamine diphosphate; that span reads AHS. Asp147 contacts Mg(2+). Residues 148–149, Asn177, Tyr284, and Glu366 contribute to the thiamine diphosphate site; that span reads GA. Residue Asn177 participates in Mg(2+) binding.

It belongs to the transketolase family. DXPS subfamily. As to quaternary structure, homodimer. It depends on Mg(2+) as a cofactor. The cofactor is thiamine diphosphate.

The enzyme catalyses D-glyceraldehyde 3-phosphate + pyruvate + H(+) = 1-deoxy-D-xylulose 5-phosphate + CO2. It functions in the pathway metabolic intermediate biosynthesis; 1-deoxy-D-xylulose 5-phosphate biosynthesis; 1-deoxy-D-xylulose 5-phosphate from D-glyceraldehyde 3-phosphate and pyruvate: step 1/1. Its function is as follows. Catalyzes the acyloin condensation reaction between C atoms 2 and 3 of pyruvate and glyceraldehyde 3-phosphate to yield 1-deoxy-D-xylulose-5-phosphate (DXP). The sequence is that of 1-deoxy-D-xylulose-5-phosphate synthase from Bordetella bronchiseptica (strain ATCC BAA-588 / NCTC 13252 / RB50) (Alcaligenes bronchisepticus).